Reading from the N-terminus, the 225-residue chain is Cbp/p300-interacting transactivator 2 (225 aa).

The protein belongs to the CITED family.

Its subcellular location is the nucleus. Functionally, transcriptional coactivator or corepressor of the p300/CBP-mediated transcription complex. May be involved in sex determination, early gonad development, left-right patterning during embryogenesis and differentiation of the adrenal cortex. In Xenopus laevis (African clawed frog), this protein is Cbp/p300-interacting transactivator 2 (cited2).